We begin with the raw amino-acid sequence, 218 residues long: Oxygen regulatory protein NreC (218 aa).

Positions 2 to 119 (KIVIADDHAV…QLILAVRTVY (118 aa)) constitute a Response regulatory domain. At Asp53 the chain carries 4-aspartylphosphate. Residues 149–214 (SSDPFKILSK…ELVEYALKKK (66 aa)) form the HTH luxR-type domain. The H-T-H motif DNA-binding region spans 173 to 192 (NKDIAEKLFVSVKTVEAHKT).

Phosphorylated by NreB.

The protein resides in the cytoplasm. Its function is as follows. Member of the two-component regulatory system NreB/NreC involved in the control of dissimilatory nitrate/nitrite reduction in response to oxygen. Phosphorylated NreC binds to a GC-rich palindromic sequence at the promoters of the nitrate (narGHJI) and nitrite (nir) reductase operons, as well as the putative nitrate transporter gene narT, and activates their expression. The chain is Oxygen regulatory protein NreC (nreC) from Staphylococcus epidermidis (strain ATCC 35984 / DSM 28319 / BCRC 17069 / CCUG 31568 / BM 3577 / RP62A).